A 162-amino-acid chain; its full sequence is 2-amino-4-hydroxy-6-hydroxymethyldihydropteridine pyrophosphokinase (162 aa).

It belongs to the HPPK family.

The enzyme catalyses 6-hydroxymethyl-7,8-dihydropterin + ATP = (7,8-dihydropterin-6-yl)methyl diphosphate + AMP + H(+). It functions in the pathway cofactor biosynthesis; tetrahydrofolate biosynthesis; 2-amino-4-hydroxy-6-hydroxymethyl-7,8-dihydropteridine diphosphate from 7,8-dihydroneopterin triphosphate: step 4/4. Catalyzes the transfer of pyrophosphate from adenosine triphosphate (ATP) to 6-hydroxymethyl-7,8-dihydropterin, an enzymatic step in folate biosynthesis pathway. The chain is 2-amino-4-hydroxy-6-hydroxymethyldihydropteridine pyrophosphokinase (folK) from Streptococcus pyogenes serotype M3 (strain ATCC BAA-595 / MGAS315).